The chain runs to 226 residues: Cytidylate kinase (226 aa).

Position 10–18 (10–18 (GPASSGKST)) interacts with ATP.

Belongs to the cytidylate kinase family. Type 1 subfamily.

The protein localises to the cytoplasm. It catalyses the reaction CMP + ATP = CDP + ADP. It carries out the reaction dCMP + ATP = dCDP + ADP. This chain is Cytidylate kinase, found in Streptococcus uberis (strain ATCC BAA-854 / 0140J).